A 176-amino-acid polypeptide reads, in one-letter code: Large ribosomal subunit protein uL10 (176 aa).

Belongs to the universal ribosomal protein uL10 family. In terms of assembly, part of the ribosomal stalk of the 50S ribosomal subunit. The N-terminus interacts with L11 and the large rRNA to form the base of the stalk. The C-terminus forms an elongated spine to which L12 dimers bind in a sequential fashion forming a multimeric L10(L12)X complex.

In terms of biological role, forms part of the ribosomal stalk, playing a central role in the interaction of the ribosome with GTP-bound translation factors. The chain is Large ribosomal subunit protein uL10 from Mycobacteroides abscessus (strain ATCC 19977 / DSM 44196 / CCUG 20993 / CIP 104536 / JCM 13569 / NCTC 13031 / TMC 1543 / L948) (Mycobacterium abscessus).